Consider the following 457-residue polypeptide: Cysteine--tRNA ligase (457 aa).

Cys28 lines the Zn(2+) pocket. The 'HIGH' region motif lies at 30 to 40 (PTVYDTAHIGN). Zn(2+)-binding residues include Cys212, His237, and Glu241. The short motif at 270–274 (KMSKS) is the 'KMSKS' region element. Lys273 contacts ATP.

The protein belongs to the class-I aminoacyl-tRNA synthetase family. As to quaternary structure, monomer. Requires Zn(2+) as cofactor.

Its subcellular location is the cytoplasm. It catalyses the reaction tRNA(Cys) + L-cysteine + ATP = L-cysteinyl-tRNA(Cys) + AMP + diphosphate. The sequence is that of Cysteine--tRNA ligase from Wolbachia pipientis wMel.